The sequence spans 78 residues: Short neurotoxin 342 (78 aa).

Positions 1 to 21 are cleaved as a signal peptide; it reads MKTLLLTLVVLTIVCLDLGYT. 4 cysteine pairs are disulfide-bonded: Cys-24–Cys-43, Cys-38–Cys-57, Cys-59–Cys-70, and Cys-71–Cys-76.

It belongs to the three-finger toxin family. Short-chain subfamily. Type I alpha-neurotoxin sub-subfamily. In terms of tissue distribution, expressed by the venom gland.

Its subcellular location is the secreted. In terms of biological role, binds to muscle nicotinic acetylcholine receptor (nAChR) and inhibit acetylcholine from binding to the receptor, thereby impairing neuromuscular transmission. The polypeptide is Short neurotoxin 342 (Drysdalia coronoides (White-lipped snake)).